A 379-amino-acid chain; its full sequence is tRNA-specific 2-thiouridylase MnmA (379 aa).

Residues 9 to 16 (AMSGGVDS) and Met-35 each bind ATP. Residues 94–96 (NPD) are interaction with target base in tRNA. The active-site Nucleophile is the Cys-99. Cys-99 and Cys-195 are disulfide-bonded. Gly-123 lines the ATP pocket. An interaction with tRNA region spans residues 145-147 (KDQ). The Cysteine persulfide intermediate role is filled by Cys-195. Residues 307-308 (RY) are interaction with tRNA.

It belongs to the MnmA/TRMU family.

It is found in the cytoplasm. It carries out the reaction S-sulfanyl-L-cysteinyl-[protein] + uridine(34) in tRNA + AH2 + ATP = 2-thiouridine(34) in tRNA + L-cysteinyl-[protein] + A + AMP + diphosphate + H(+). Functionally, catalyzes the 2-thiolation of uridine at the wobble position (U34) of tRNA, leading to the formation of s(2)U34. This is tRNA-specific 2-thiouridylase MnmA from Xylella fastidiosa (strain M23).